The primary structure comprises 474 residues: Glutathione synthetase (474 aa).

Ala2 carries the post-translational modification N-acetylalanine. Substrate is bound at residue Arg125. Position 144 (Glu144) interacts with ATP. Positions 144 and 146 each coordinate Mg(2+). Residues 148–151, 214–216, Gln220, and 267–270 contribute to the substrate site; these read ISAS, ERN, and RDGY. Residues Lys305, 364 to 373, Tyr375, and 398 to 401 each bind ATP; these read KPQREGGGNN and MEKI. Glu368 lines the Mg(2+) pocket. Phosphoserine is present on Ser415. ATP is bound at residue Glu425. Residue Arg450 participates in substrate binding. ATP contacts are provided by Lys452 and Asp458. 461–462 serves as a coordination point for substrate; sequence VA.

The protein belongs to the eukaryotic GSH synthase family. Homodimer. Mg(2+) is required as a cofactor.

The enzyme catalyses gamma-L-glutamyl-L-cysteine + glycine + ATP = glutathione + ADP + phosphate + H(+). The catalysed reaction is gamma-L-glutamyl-(2S)-2-aminobutanoate + glycine + ATP = ophthalmate + ADP + phosphate + H(+). It functions in the pathway sulfur metabolism; glutathione biosynthesis; glutathione from L-cysteine and L-glutamate: step 2/2. Functionally, catalyzes the production of glutathione from gamma-glutamylcysteine and glycine in an ATP-dependent manner. Glutathione (gamma-glutamylcysteinylglycine, GSH) is the most abundant intracellular thiol in living aerobic cells and is required for numerous processes including the protection of cells against oxidative damage, amino acid transport, the detoxification of foreign compounds, the maintenance of protein sulfhydryl groups in a reduced state and acts as a cofactor for a number of enzymes. Participates in ophthalmate biosynthesis in hepatocytes. The sequence is that of Glutathione synthetase from Mus musculus (Mouse).